A 200-amino-acid chain; its full sequence is V-set and transmembrane domain-containing protein 5 (200 aa).

Residues 1-28 (MRPLPSGRRKTRGISLGLFALCLAAARC) form the signal peptide. Over 29–147 (LQSQGVSLYI…VSEILYEDLH (119 aa)) the chain is Extracellular. An Ig-like C2-type domain is found at 37 to 139 (YIPQATINAT…QFGTIVLHVS (103 aa)). Asn102 is a glycosylation site (N-linked (GlcNAc...) asparagine). Residues 148-168 (FVAVILAFLAAVAAVLISLMW) traverse the membrane as a helical segment. Residues 169–200 (VCNKCAYKFQRKRRHKLKESTTEEIELEDVEC) are Cytoplasmic-facing. The tract at residues 170–186 (CNKCAYKFQRKRRHKLK) is important for CDC42-dependent filopodia induction.

In terms of assembly, can homooligomerize through cis interactions within the same cell membrane. In terms of processing, N-glycosylated.

It localises to the cell membrane. Its subcellular location is the cell projection. It is found in the dendrite. The protein localises to the axon. Functionally, cell adhesion-like membrane protein of the central nervous system (CNS) which modulates both the position and complexity of central neurons by altering their membrane morphology and dynamics. Involved in the formation of neuronal dendrites and protrusions including dendritic filopodia. In synaptogenesis, regulates synapse formation by altering dendritic spine morphology and actin distribution. Promotes formation of unstable neuronal spines such as thin and branched types. Regulates neuronal morphogenesis and migration during cortical development in the brain. The polypeptide is V-set and transmembrane domain-containing protein 5 (VSTM5) (Homo sapiens (Human)).